We begin with the raw amino-acid sequence, 136 residues long: Galectin-7 (136 aa).

Positions 6–136 (HKTPLPQGVR…DVQLHSVKIF (131 aa)) constitute a Galectin domain. A beta-D-galactoside is bound at residue 70–76 (WGREERG).

In terms of assembly, monomer.

Its subcellular location is the cytoplasm. The protein resides in the nucleus. The protein localises to the secreted. Its function is as follows. Could be involved in cell-cell and/or cell-matrix interactions necessary for normal growth control. Pro-apoptotic protein that functions intracellularly upstream of JNK activation and cytochrome c release. This chain is Galectin-7 (Lgals7), found in Rattus norvegicus (Rat).